Reading from the N-terminus, the 63-residue chain is DNA-directed RNA polymerase subunit omega (63 aa).

The protein belongs to the RNA polymerase subunit omega family. As to quaternary structure, the RNAP catalytic core consists of 2 alpha, 1 beta, 1 beta' and 1 omega subunit. When a sigma factor is associated with the core the holoenzyme is formed, which can initiate transcription.

The catalysed reaction is RNA(n) + a ribonucleoside 5'-triphosphate = RNA(n+1) + diphosphate. In terms of biological role, promotes RNA polymerase assembly. Latches the N- and C-terminal regions of the beta' subunit thereby facilitating its interaction with the beta and alpha subunits. The chain is DNA-directed RNA polymerase subunit omega from Blochmanniella pennsylvanica (strain BPEN).